We begin with the raw amino-acid sequence, 563 residues long: Group II intron-interrupted relaxase LtrB (563 aa).

Residue Y44 is part of the active site. Mg(2+) is bound by residues H159 and H161.

It belongs to the mobilization (MOB) protein type 1 family. It depends on Mg(2+) as a cofactor. The cofactor is Mn(2+).

Mediates initiation of conjugal transfer possibly by introducing a single-stranded nick at the potential origin of transfer. This chain is Group II intron-interrupted relaxase LtrB (ltrBE1), found in Lactococcus lactis subsp. cremoris (strain MG1363).